We begin with the raw amino-acid sequence, 361 residues long: Phospho-N-acetylmuramoyl-pentapeptide-transferase (361 aa).

Helical transmembrane passes span 25–45 (RGIL…PAVI), 73–93 (TMGG…WGDL), 98–118 (VWLV…DDWI), 139–159 (IFGL…AAIT), 168–188 (IALP…IVGF), 200–220 (GLAI…AYAS), 237–257 (AGEL…FLWF), 264–284 (VFMG…IAVI), 289–309 (MVLV…MIQV), and 339–359 (VIVR…ATLK).

This sequence belongs to the glycosyltransferase 4 family. MraY subfamily. Mg(2+) serves as cofactor.

Its subcellular location is the cell inner membrane. It catalyses the reaction UDP-N-acetyl-alpha-D-muramoyl-L-alanyl-gamma-D-glutamyl-meso-2,6-diaminopimeloyl-D-alanyl-D-alanine + di-trans,octa-cis-undecaprenyl phosphate = di-trans,octa-cis-undecaprenyl diphospho-N-acetyl-alpha-D-muramoyl-L-alanyl-D-glutamyl-meso-2,6-diaminopimeloyl-D-alanyl-D-alanine + UMP. It participates in cell wall biogenesis; peptidoglycan biosynthesis. Its function is as follows. Catalyzes the initial step of the lipid cycle reactions in the biosynthesis of the cell wall peptidoglycan: transfers peptidoglycan precursor phospho-MurNAc-pentapeptide from UDP-MurNAc-pentapeptide onto the lipid carrier undecaprenyl phosphate, yielding undecaprenyl-pyrophosphoryl-MurNAc-pentapeptide, known as lipid I. This Xanthomonas axonopodis pv. citri (strain 306) protein is Phospho-N-acetylmuramoyl-pentapeptide-transferase.